We begin with the raw amino-acid sequence, 335 residues long: Homeobox protein unc-39 (335 aa).

2 disordered regions span residues Phe27 to Pro56 and Arg269 to Ser294. The span at Thr28–Ser41 shows a compositional bias: low complexity. The segment covering Pro42–Gly53 has biased composition (polar residues). Positions Lys225–Asn277 form a DNA-binding region, homeobox. The span at Asn276–Ser294 shows a compositional bias: low complexity.

It belongs to the SIX/Sine oculis homeobox family.

The protein localises to the nucleus. In terms of biological role, probable transcription factor required for differentiation and migration of neuronal cells, such as RID and CAN neurons. Specifically, plays a role in the terminal differentiation of RID peptidergic neurons. Also required for CAN neuron axon guidance. The protein is Homeobox protein unc-39 of Caenorhabditis elegans.